A 349-amino-acid chain; its full sequence is Transcription elongation factor A protein 3 (349 aa).

A TFIIS N-terminal domain is found at 5–82 (EELLRIAKKL…RNWKQLLDSP (78 aa)). The disordered stretch occupies residues 80 to 170 (DSPATPKGEK…RTPSSPSSPT (91 aa)). Residues 101–110 (KGLDCSDWKP) show a composition bias toward basic and acidic residues. Ser-115 is modified (phosphoserine). Basic and acidic residues predominate over residues 121 to 133 (RVEEPKDRRDSVD). 2 stretches are compositionally biased toward low complexity: residues 134–144 (SKSSATSSPKR) and 160–170 (PRTPSSPSSPT). A Phosphoserine modification is found at Ser-141. The region spanning 188–304 (VRDKCVEMLS…EHQMAKTGGT (117 aa)) is the TFIIS central domain. A TFIIS-type zinc finger spans residues 307-347 (DLFQCSKCKKKNCTYNQVQTRSADEPMTTFVLCNECGNRWK). Residues Cys-311, Cys-314, Cys-339, and Cys-342 each contribute to the Zn(2+) site.

It belongs to the TFS-II family.

The protein resides in the nucleus. Its function is as follows. Necessary for efficient RNA polymerase II transcription elongation past template-encoded arresting sites. The arresting sites in DNA have the property of trapping a certain fraction of elongating RNA polymerases that pass through, resulting in locked ternary complexes. Cleavage of the nascent transcript by S-II allows the resumption of elongation from the new 3'-terminus. The polypeptide is Transcription elongation factor A protein 3 (TCEA3) (Bos taurus (Bovine)).